Here is a 116-residue protein sequence, read N- to C-terminus: Large ribosomal subunit protein bL17 (116 aa).

It belongs to the bacterial ribosomal protein bL17 family. As to quaternary structure, part of the 50S ribosomal subunit. Contacts protein L32.

This is Large ribosomal subunit protein bL17 from Crocosphaera subtropica (strain ATCC 51142 / BH68) (Cyanothece sp. (strain ATCC 51142)).